Here is a 611-residue protein sequence, read N- to C-terminus: Lanthanide-dependent methanol dehydrogenase (611 aa).

Positions Met1 to Ala34 are cleaved as a signal peptide. Cysteines 138 and 139 form a disulfide. The pyrroloquinoline quinone site is built by Arg144, Thr188, Ser203, Gly204, and Gly205. Residue Glu206 participates in Ce(3+) binding. A Eu(3+)-binding site is contributed by Glu206. Thr270 and Trp272 together coordinate pyrroloquinoline quinone. Positions 290, 333, and 335 each coordinate Ce(3+). Residues Asn290, Asp333, and Asp335 each contribute to the Eu(3+) site. Arg360 is a binding site for pyrroloquinoline quinone. Cys414 and Cys443 are joined by a disulfide. Residues Trp501 and Trp566 each contribute to the pyrroloquinoline quinone site.

This sequence belongs to the bacterial PQQ dehydrogenase family. Homodimer. The cofactor is Ce(3+). La(3+) is required as a cofactor. It depends on Nd(3+) as a cofactor. Pr(3+) serves as cofactor. Requires Eu(3+) as cofactor. The cofactor is pyrroloquinoline quinone.

It is found in the periplasm. It carries out the reaction 2 Fe(III)-[cytochrome cL] + methanol = 2 Fe(II)-[cytochrome cL] + formaldehyde + 2 H(+). The enzyme catalyses 4 Fe(III)-[cytochrome cL] + methanol + H2O = 4 Fe(II)-[cytochrome cL] + formate + 5 H(+). The catalysed reaction is 2 Fe(III)-[cytochrome cL] + a primary alcohol = 2 Fe(II)-[cytochrome cL] + an aldehyde + 2 H(+). The protein operates within one-carbon metabolism; methanol degradation. Catalyzes the oxidation of methanol to formaldehyde or formate in the presence of lanthanides (Ln). Is a key enzyme in methane/methanol metabolism, allowing M.fumariolicum to grow on methane as the sole carbon and energy source. Can also act on other primary alcohols in vitro, such as ethanol, 1-propanol, 1-butanol, and 1-hexanol, but is not able to oxidize secondary alcohols and acetaldehyde. Uses a specific cytochrome cL, encoded by the adjacent gene in the locus, as electron acceptor. In Methylacidiphilum fumariolicum (strain SolV), this protein is Lanthanide-dependent methanol dehydrogenase.